The following is a 93-amino-acid chain: SH3 domain-binding glutamic acid-rich-like protein 3 (93 aa).

The residue at position 2 (serine 2) is an N-acetylserine. The Glutaredoxin domain occupies serine 2–alanine 93. Threonine 9 carries O-linked (GalNAc...) threonine glycosylation.

This sequence belongs to the SH3BGR family. Interacts with MYO1C (via its IQ motifs); the interaction is dependent on calcium and takes place at membrane ruffles. May be glycosylated. Expressed in heart, liver, lung, kidney, spleen, thymus, ovarian follicles, skeletal muscle, brain, lymph node and mammary epithelial and stromal cells (at protein level).

The protein resides in the cytoplasm. It localises to the cytosol. The protein localises to the cell projection. It is found in the ruffle membrane. Its subcellular location is the nucleus. Functionally, could act as a modulator of glutaredoxin biological activity. May play a role in cytoskeleton organization. The protein is SH3 domain-binding glutamic acid-rich-like protein 3 of Rattus norvegicus (Rat).